Consider the following 1127-residue polypeptide: Cellulose synthase-like protein D1 (1127 aa).

Residues 1–24 (MASKGILKNGGKPPTAPSSAAPTV) are disordered. Helical transmembrane passes span 262 to 282 (VISP…LFLM) and 292 to 312 (AIWL…SWVL). Residues Asp-392 and Asp-828 contribute to the active site. 6 helical membrane-spanning segments follow: residues 910 to 930 (VFLI…QFIV), 936 to 956 (TFLT…MLEI), 982 to 1002 (LAAV…SFTL), 1025 to 1045 (SLMI…AVGF), 1059 to 1079 (LLGG…FAKG), and 1089 to 1109 (TIVY…WIAI).

The protein belongs to the glycosyltransferase 2 family. Plant cellulose synthase-like D subfamily.

It localises to the golgi apparatus membrane. In terms of biological role, thought to be a Golgi-localized beta-glycan synthase that polymerize the backbones of noncellulosic polysaccharides (hemicelluloses) of plant cell wall. This Oryza sativa subsp. indica (Rice) protein is Cellulose synthase-like protein D1 (CSLD1).